The chain runs to 295 residues: Small ribosomal subunit biogenesis GTPase RsgA (295 aa).

The 159-residue stretch at 65-223 (KNQLVRPPVA…VLDTPGFTAL (159 aa)) folds into the CP-type G domain. GTP-binding positions include 114-117 (NKVD) and 165-173 (GPSGVGKSS). Zn(2+) is bound by residues Cys-246, Cys-251, His-253, and Cys-259.

The protein belongs to the TRAFAC class YlqF/YawG GTPase family. RsgA subfamily. As to quaternary structure, monomer. Associates with 30S ribosomal subunit, binds 16S rRNA. The cofactor is Zn(2+).

The protein resides in the cytoplasm. Its function is as follows. One of several proteins that assist in the late maturation steps of the functional core of the 30S ribosomal subunit. Helps release RbfA from mature subunits. May play a role in the assembly of ribosomal proteins into the subunit. Circularly permuted GTPase that catalyzes slow GTP hydrolysis, GTPase activity is stimulated by the 30S ribosomal subunit. This chain is Small ribosomal subunit biogenesis GTPase RsgA, found in Caldanaerobacter subterraneus subsp. tengcongensis (strain DSM 15242 / JCM 11007 / NBRC 100824 / MB4) (Thermoanaerobacter tengcongensis).